The primary structure comprises 235 residues: tRNA pseudouridine synthase B (235 aa).

The active-site Nucleophile is the Asp48.

Belongs to the pseudouridine synthase TruB family. Type 1 subfamily.

It carries out the reaction uridine(55) in tRNA = pseudouridine(55) in tRNA. Functionally, responsible for synthesis of pseudouridine from uracil-55 in the psi GC loop of transfer RNAs. The chain is tRNA pseudouridine synthase B from Phocaeicola vulgatus (strain ATCC 8482 / DSM 1447 / JCM 5826 / CCUG 4940 / NBRC 14291 / NCTC 11154) (Bacteroides vulgatus).